We begin with the raw amino-acid sequence, 125 residues long: Small ribosomal subunit protein uS13 (125 aa).

Residues 92-125 (RRSLPVRGQNTQTNARTRKGKRKTVAGKKKAARK) are disordered. The segment covering 107–125 (RTRKGKRKTVAGKKKAARK) has biased composition (basic residues).

This sequence belongs to the universal ribosomal protein uS13 family. As to quaternary structure, part of the 30S ribosomal subunit. Forms a loose heterodimer with protein S19. Forms two bridges to the 50S subunit in the 70S ribosome.

Located at the top of the head of the 30S subunit, it contacts several helices of the 16S rRNA. In the 70S ribosome it contacts the 23S rRNA (bridge B1a) and protein L5 of the 50S subunit (bridge B1b), connecting the 2 subunits; these bridges are implicated in subunit movement. Contacts the tRNAs in the A and P-sites. This chain is Small ribosomal subunit protein uS13, found in Chlorobium luteolum (strain DSM 273 / BCRC 81028 / 2530) (Pelodictyon luteolum).